Here is a 300-residue protein sequence, read N- to C-terminus: Mycothiol acetyltransferase (300 aa).

N-acetyltransferase domains are found at residues 4 to 140 and 151 to 300; these read IDWR…RPLT and VRLA…AVAD. A 1D-myo-inositol 2-(L-cysteinylamino)-2-deoxy-alpha-D-glucopyranoside-binding site is contributed by Asp36. 79 to 81 serves as a coordination point for acetyl-CoA; the sequence is LVV. 1D-myo-inositol 2-(L-cysteinylamino)-2-deoxy-alpha-D-glucopyranoside is bound by residues Glu178, Lys219, and Glu227. 231–233 contacts acetyl-CoA; sequence VGV. Tyr269 contributes to the 1D-myo-inositol 2-(L-cysteinylamino)-2-deoxy-alpha-D-glucopyranoside binding site. 274–279 contributes to the acetyl-CoA binding site; sequence NGAAVK.

The protein belongs to the acetyltransferase family. MshD subfamily. As to quaternary structure, monomer.

It catalyses the reaction 1D-myo-inositol 2-(L-cysteinylamino)-2-deoxy-alpha-D-glucopyranoside + acetyl-CoA = mycothiol + CoA + H(+). Its function is as follows. Catalyzes the transfer of acetyl from acetyl-CoA to desacetylmycothiol (Cys-GlcN-Ins) to form mycothiol. This Mycobacterium sp. (strain JLS) protein is Mycothiol acetyltransferase.